The sequence spans 414 residues: 3-oxoacyl-[acyl-carrier-protein] synthase 2 (414 aa).

Positions 3–411 constitute a Ketosynthase family 3 (KS3) domain; that stretch reads KRRVVITGLG…GTNGTLVLSR (409 aa). Catalysis depends on for beta-ketoacyl synthase activity residues Cys-164, His-304, and His-341.

Belongs to the thiolase-like superfamily. Beta-ketoacyl-ACP synthases family. As to quaternary structure, homodimer.

The catalysed reaction is a fatty acyl-[ACP] + malonyl-[ACP] + H(+) = a 3-oxoacyl-[ACP] + holo-[ACP] + CO2. The enzyme catalyses (9Z)-hexadecenoyl-[ACP] + malonyl-[ACP] + H(+) = 3-oxo-(11Z)-octadecenoyl-[ACP] + holo-[ACP] + CO2. The protein operates within lipid metabolism; fatty acid biosynthesis. In terms of biological role, involved in the type II fatty acid elongation cycle. Catalyzes the elongation of a wide range of acyl-ACP by the addition of two carbons from malonyl-ACP to an acyl acceptor. Can efficiently catalyze the conversion of palmitoleoyl-ACP (cis-hexadec-9-enoyl-ACP) to cis-vaccenoyl-ACP (cis-octadec-11-enoyl-ACP), an essential step in the thermal regulation of fatty acid composition. The chain is 3-oxoacyl-[acyl-carrier-protein] synthase 2 (fabF) from Coxiella burnetii (strain RSA 493 / Nine Mile phase I).